Here is a 222-residue protein sequence, read N- to C-terminus: Myosin regulatory light chain 2 (222 aa).

Residues M1–G65 form a disordered region. The residue at position 2 (A2) is an N-acetylalanine. A compositionally biased stretch (low complexity) spans T19–G53. S66 and S67 each carry phosphoserine. 3 EF-hand domains span residues K75 to I110, D147 to K180, and F181 to E216. Residues D88, D90, D92, and D99 each coordinate Ca(2+).

As to quaternary structure, myosin is a hexamer of 2 heavy chains and 4 light chains.

In Drosophila melanogaster (Fruit fly), this protein is Myosin regulatory light chain 2 (Mlc2).